A 62-amino-acid polypeptide reads, in one-letter code: Large ribosomal subunit protein uL30 (62 aa).

It belongs to the universal ribosomal protein uL30 family. As to quaternary structure, part of the 50S ribosomal subunit.

The chain is Large ribosomal subunit protein uL30 from Thioalkalivibrio sulfidiphilus (strain HL-EbGR7).